A 112-amino-acid polypeptide reads, in one-letter code: Protein lin-52 homolog (112 aa).

Belongs to the lin-52 family. As to quaternary structure, component of the DREAM complex.

The protein is Protein lin-52 homolog (lin52) of Tetraodon nigroviridis (Spotted green pufferfish).